The following is a 749-amino-acid chain: Homeobox-leucine zipper protein ROC7 (749 aa).

The segment at 26–98 (LDQHQQHQHQ…KKRYHRHTQH (73 aa)) is disordered. Residues 46 to 57 (SDGRAPRDELEM) show a composition bias toward basic and acidic residues. The span at 68 to 78 (SGGGGGGGGSG) shows a compositional bias: gly residues. Residues 86-97 (RPRKKRYHRHTQ) show a composition bias toward basic residues. The homeobox DNA-binding region spans 88–147 (RKKRYHRHTQHQIQELEAFFKECPHPDDKQRKELSRELGLEPLQVKFWFQNKRTQMKTQH). Residues 137–218 (QNKRTQMKTQ…DRISAIAAKY (82 aa)) adopt a coiled-coil conformation. An START domain is found at 256–494 (ADFDKPLVIE…LERQCERLAS (239 aa)).

Belongs to the HD-ZIP homeobox family. Class IV subfamily.

It localises to the nucleus. Probable transcription factor. The chain is Homeobox-leucine zipper protein ROC7 (ROC7) from Oryza sativa subsp. indica (Rice).